The primary structure comprises 174 residues: Small ribosomal subunit protein bS16 (174 aa).

Positions 81–174 (QRFTGEPAPP…DATTDATPSA (94 aa)) are disordered. A compositionally biased stretch (pro residues) spans 87–97 (PAPPPMKTAPP). The segment covering 98 to 118 (KPDKKALFEAAAKEAAGEPRA) has biased composition (basic and acidic residues). The segment covering 135-158 (ETTPAAEAAPDAAASADEPAGGAS) has biased composition (low complexity). Polar residues predominate over residues 160–174 (AAESQDATTDATPSA).

Belongs to the bacterial ribosomal protein bS16 family.

The polypeptide is Small ribosomal subunit protein bS16 (Acidothermus cellulolyticus (strain ATCC 43068 / DSM 8971 / 11B)).